The primary structure comprises 138 residues: Actophorin (138 aa).

S2 carries the post-translational modification Blocked amino end (Ser). The region spanning 3 to 134 (GIAVSDDCVQ…SEDAVSERAK (132 aa)) is the ADF-H domain.

It belongs to the actin-binding proteins ADF family. Monomer.

The protein resides in the cytoplasm. In terms of biological role, forms a one to one complex with monomeric actin. Can regulate the pool available for polymerization. Severs actin filaments in a dose-dependent manner. This Acanthamoeba castellanii (Amoeba) protein is Actophorin.